A 334-amino-acid chain; its full sequence is Holliday junction branch migration complex subunit RuvB (334 aa).

The segment at 4-184 (ADRIISASPK…FGIVQRLEFY (181 aa)) is large ATPase domain (RuvB-L). ATP-binding positions include Ile23, Arg24, Gly65, Lys68, Thr69, Thr70, 131-133 (EDY), Arg174, Tyr184, and Arg221. Thr69 is a Mg(2+) binding site. The tract at residues 185 to 255 (SVDDLTSIVK…IAKQALAMLD (71 aa)) is small ATPAse domain (RuvB-S). The segment at 258–334 (SEGFDFMDIK…YAHLGIAKLD (77 aa)) is head domain (RuvB-H). Arg294, Arg313, and Arg318 together coordinate DNA.

This sequence belongs to the RuvB family. As to quaternary structure, homohexamer. Forms an RuvA(8)-RuvB(12)-Holliday junction (HJ) complex. HJ DNA is sandwiched between 2 RuvA tetramers; dsDNA enters through RuvA and exits via RuvB. An RuvB hexamer assembles on each DNA strand where it exits the tetramer. Each RuvB hexamer is contacted by two RuvA subunits (via domain III) on 2 adjacent RuvB subunits; this complex drives branch migration. In the full resolvosome a probable DNA-RuvA(4)-RuvB(12)-RuvC(2) complex forms which resolves the HJ.

It localises to the cytoplasm. It catalyses the reaction ATP + H2O = ADP + phosphate + H(+). In terms of biological role, the RuvA-RuvB-RuvC complex processes Holliday junction (HJ) DNA during genetic recombination and DNA repair, while the RuvA-RuvB complex plays an important role in the rescue of blocked DNA replication forks via replication fork reversal (RFR). RuvA specifically binds to HJ cruciform DNA, conferring on it an open structure. The RuvB hexamer acts as an ATP-dependent pump, pulling dsDNA into and through the RuvAB complex. RuvB forms 2 homohexamers on either side of HJ DNA bound by 1 or 2 RuvA tetramers; 4 subunits per hexamer contact DNA at a time. Coordinated motions by a converter formed by DNA-disengaged RuvB subunits stimulates ATP hydrolysis and nucleotide exchange. Immobilization of the converter enables RuvB to convert the ATP-contained energy into a lever motion, pulling 2 nucleotides of DNA out of the RuvA tetramer per ATP hydrolyzed, thus driving DNA branch migration. The RuvB motors rotate together with the DNA substrate, which together with the progressing nucleotide cycle form the mechanistic basis for DNA recombination by continuous HJ branch migration. Branch migration allows RuvC to scan DNA until it finds its consensus sequence, where it cleaves and resolves cruciform DNA. This is Holliday junction branch migration complex subunit RuvB from Actinobacillus pleuropneumoniae serotype 5b (strain L20).